Here is a 1389-residue protein sequence, read N- to C-terminus: DNA-directed RNA polymerase subunit beta'' (1389 aa).

Zn(2+) is bound by residues C224, C295, C302, and C305.

The protein belongs to the RNA polymerase beta' chain family. RpoC2 subfamily. As to quaternary structure, in plastids the minimal PEP RNA polymerase catalytic core is composed of four subunits: alpha, beta, beta', and beta''. When a (nuclear-encoded) sigma factor is associated with the core the holoenzyme is formed, which can initiate transcription. It depends on Zn(2+) as a cofactor.

The protein localises to the plastid. It localises to the chloroplast. It carries out the reaction RNA(n) + a ribonucleoside 5'-triphosphate = RNA(n+1) + diphosphate. In terms of biological role, DNA-dependent RNA polymerase catalyzes the transcription of DNA into RNA using the four ribonucleoside triphosphates as substrates. The polypeptide is DNA-directed RNA polymerase subunit beta'' (Morus indica (Mulberry)).